Here is a 256-residue protein sequence, read N- to C-terminus: DNA repair protein RecO (256 aa).

Belongs to the RecO family.

Its function is as follows. Involved in DNA repair and RecF pathway recombination. This is DNA repair protein RecO from Streptococcus equi subsp. zooepidemicus (strain MGCS10565).